A 559-amino-acid chain; its full sequence is Pentatricopeptide repeat-containing protein At2g42920, chloroplastic (559 aa).

Residues 1-14 (MSPTILSFSGVTVP) constitute a chloroplast transit peptide. PPR repeat units lie at residues 88–122 (NPFV…SPSV), 125–159 (QRLT…GLED), 160–190 (DSFI…MIGF), 191–221 (DVVA…MPQR), 222–256 (NGVS…DVKP), 257–291 (DGFT…RFEL), 292–322 (NSIV…APKK), 323–357 (QLSC…GLEP), 358–388 (DSVS…MKEK), and 394–424 (SIKH…MPVE). The type E motif stretch occupies residues 429–504 (IWSSLLSACR…EVGCSSIEVD (76 aa)). A type E(+) motif region spans residues 505 to 535 (FEVHEFISCGGTHPKSAEIYSLLDILNWDVS).

The protein belongs to the PPR family. PCMP-E subfamily.

The protein resides in the plastid. Its subcellular location is the chloroplast. The chain is Pentatricopeptide repeat-containing protein At2g42920, chloroplastic (PCMP-E75) from Arabidopsis thaliana (Mouse-ear cress).